Here is a 447-residue protein sequence, read N- to C-terminus: Tubulin beta-1 chain (447 aa).

Residues Gln11, Glu69, Ser138, Gly142, Thr143, Gly144, Asn204, and Asn226 each coordinate GTP. Glu69 is a Mg(2+) binding site. Positions 428 to 447 (ATADEDAEFDEEQEQEIEDN) are disordered. Residues 429 to 447 (TADEDAEFDEEQEQEIEDN) show a composition bias toward acidic residues.

It belongs to the tubulin family. As to quaternary structure, dimer of alpha and beta chains. A typical microtubule is a hollow water-filled tube with an outer diameter of 25 nm and an inner diameter of 15 nM. Alpha-beta heterodimers associate head-to-tail to form protofilaments running lengthwise along the microtubule wall with the beta-tubulin subunit facing the microtubule plus end conferring a structural polarity. Microtubules usually have 13 protofilaments but different protofilament numbers can be found in some organisms and specialized cells. Requires Mg(2+) as cofactor.

It localises to the cytoplasm. The protein resides in the cytoskeleton. Tubulin is the major constituent of microtubules, a cylinder consisting of laterally associated linear protofilaments composed of alpha- and beta-tubulin heterodimers. Microtubules grow by the addition of GTP-tubulin dimers to the microtubule end, where a stabilizing cap forms. Below the cap, tubulin dimers are in GDP-bound state, owing to GTPase activity of alpha-tubulin. This is Tubulin beta-1 chain from Manduca sexta (Tobacco hawkmoth).